Here is a 98-residue protein sequence, read N- to C-terminus: NADH-ubiquinone oxidoreductase chain 4L (98 aa).

3 helical membrane passes run 1-21 (MPII…GMLV), 29-49 (SLLC…LMAL), and 61-81 (IALL…LVSI).

It belongs to the complex I subunit 4L family. As to quaternary structure, core subunit of respiratory chain NADH dehydrogenase (Complex I) which is composed of 45 different subunits.

It localises to the mitochondrion inner membrane. It catalyses the reaction a ubiquinone + NADH + 5 H(+)(in) = a ubiquinol + NAD(+) + 4 H(+)(out). Core subunit of the mitochondrial membrane respiratory chain NADH dehydrogenase (Complex I) which catalyzes electron transfer from NADH through the respiratory chain, using ubiquinone as an electron acceptor. Part of the enzyme membrane arm which is embedded in the lipid bilayer and involved in proton translocation. The chain is NADH-ubiquinone oxidoreductase chain 4L (MT-ND4L) from Piliocolobus badius (Western red colobus).